The following is a 388-amino-acid chain: Na(+)/H(+) antiporter NhaA (388 aa).

The next 12 helical transmembrane spans lie at 14–34 (TIGILLIIATLLALFLENSPL), 59–79 (LLLWVNDGLMAVFFFYVGLEI), 95–115 (TFPAIAALGGMVVPALLFASL), 125–145 (GWAIPTATDIAFALGVLSLLG), 154–174 (VFLMTLAIVDDLGAIIVIALF), 177–197 (TKLSLTSLVVASIALTILFIM), 200–220 (MCVISKGAYILVGVALWVSVL), 222–242 (SGVHATLAGVALALLIPYRIN), 257–277 (GLHLWVNFFILPLFAFANAGV), 295–315 (IMLGLFIGKQLGVFGFGYLAV), 328–348 (LIQFYGVAVLAGIGFTMSLFI), and 362–382 (ADKLAVLIGSLLSGIWGYIVL).

The protein belongs to the NhaA Na(+)/H(+) (TC 2.A.33) antiporter family.

The protein resides in the cell inner membrane. It catalyses the reaction Na(+)(in) + 2 H(+)(out) = Na(+)(out) + 2 H(+)(in). In terms of biological role, na(+)/H(+) antiporter that extrudes sodium in exchange for external protons. In Nitratiruptor sp. (strain SB155-2), this protein is Na(+)/H(+) antiporter NhaA.